A 1042-amino-acid chain; its full sequence is Isoleucine--tRNA ligase (1042 aa).

The 'HIGH' region motif lies at 48-58 (PFATGLPHFGH). Positions 594-598 (KMSKS) match the 'KMSKS' region motif. Position 597 (Lys-597) interacts with ATP.

It belongs to the class-I aminoacyl-tRNA synthetase family. IleS type 2 subfamily. As to quaternary structure, monomer. Zn(2+) serves as cofactor.

Its subcellular location is the cytoplasm. The catalysed reaction is tRNA(Ile) + L-isoleucine + ATP = L-isoleucyl-tRNA(Ile) + AMP + diphosphate. In terms of biological role, catalyzes the attachment of isoleucine to tRNA(Ile). As IleRS can inadvertently accommodate and process structurally similar amino acids such as valine, to avoid such errors it has two additional distinct tRNA(Ile)-dependent editing activities. One activity is designated as 'pretransfer' editing and involves the hydrolysis of activated Val-AMP. The other activity is designated 'posttransfer' editing and involves deacylation of mischarged Val-tRNA(Ile). This chain is Isoleucine--tRNA ligase, found in Borreliella afzelii (strain PKo) (Borrelia afzelii).